A 202-amino-acid chain; its full sequence is Amelogenin (202 aa).

Phosphoserine is present on serine 16. The disordered stretch occupies residues 77 to 202 (QPAPPQQPVM…TDKTKREEVD (126 aa)). Over residues 78-87 (PAPPQQPVMP) the composition is skewed to pro residues. Positions 101–112 (QPNLPQPGQQPY) are enriched in low complexity. Positions 113-125 (QPQPAQQPQPHQP) are enriched in pro residues. A compositionally biased stretch (low complexity) spans 126 to 158 (IQPIQPIQPIQPMQPMQPMQPMQPMQPMQPQTP). The span at 164–176 (PLPPQPPLPPMFP) shows a compositional bias: pro residues.

This sequence belongs to the amelogenin family.

The protein resides in the secreted. It is found in the extracellular space. It localises to the extracellular matrix. In terms of biological role, plays a role in the biomineralization of teeth. Seems to regulate the formation of crystallites during the secretory stage of tooth enamel development. Thought to play a major role in the structural organization and mineralization of developing enamel. In Monodelphis domestica (Gray short-tailed opossum), this protein is Amelogenin (AMEL).